Here is a 129-residue protein sequence, read N- to C-terminus: Transcriptional activator protein (129 aa).

Over residues 1–12 the composition is skewed to low complexity; the sequence is MRSSSPSQPPSI. Positions 1-21 are disordered; it reads MRSSSPSQPPSIKKAHRQAKR. The Nuclear localization signal signature appears at 13–28; sequence KKAHRQAKRRAIRRRR. Residues 33–50 fold into a zinc finger; it reads CGCSIYFHIDCTGHGFTH. Residues 84 to 114 are disordered; the sequence is IHQNEDIPCTNTVQPQPEESVASPQSLPELP. Residues 92 to 109 are compositionally biased toward polar residues; the sequence is CTNTVQPQPEESVASPQS. The interval 115–129 is transactivation; it reads SLDDFDDSFWVNLFK.

Belongs to the geminiviridae transcriptional activator protein family. In terms of assembly, monomer. Homodimer. Homooligomer. Self-interaction correlates with nuclear localization and efficient activation of transcription. Monomers suppress local silencing by interacting with and inactivating host adenosine kinase 2 (ADK2) in the cytoplasm. Interacts with and inhibits host SNF1 kinase. Binds to ssDNA. In terms of processing, phosphorylated.

The protein localises to the host nucleus. Its subcellular location is the host cytoplasm. Its function is as follows. Strong activator of the late viral genes promoters. Enhances the expression of the capsid protein and nuclear shuttle protein. Acts as a suppressor of RNA-mediated gene silencing, also known as post-transcriptional gene silencing (PTGS), a mechanism of plant viral defense that limits the accumulation of viral RNAs. Suppresses the host RNA silencing by inhibiting adenosine kinase 2 (ADK2), a kinase involved in a general methylation pathway. Also suppresses the host basal defense by interacting with and inhibiting SNF1 kinase, a key regulator of cell metabolism implicated in innate antiviral defense. Determines pathogenicity. The polypeptide is Transcriptional activator protein (Abutilon (Upland cotton)).